The chain runs to 65 residues: Large ribosomal subunit protein uL29 (65 aa).

Belongs to the universal ribosomal protein uL29 family.

In Natranaerobius thermophilus (strain ATCC BAA-1301 / DSM 18059 / JW/NM-WN-LF), this protein is Large ribosomal subunit protein uL29.